Reading from the N-terminus, the 373-residue chain is Glutamate 5-kinase (373 aa).

Residue Lys-15 coordinates ATP. Residues Ser-55, Asp-142, and Asn-154 each contribute to the substrate site. Residues 174-175 (TD) and 216-222 (TGGMATK) each bind ATP. Positions 281 to 359 (AGSIVVDAGA…SEIEGILGFR (79 aa)) constitute a PUA domain.

The protein belongs to the glutamate 5-kinase family.

It is found in the cytoplasm. It carries out the reaction L-glutamate + ATP = L-glutamyl 5-phosphate + ADP. The protein operates within amino-acid biosynthesis; L-proline biosynthesis; L-glutamate 5-semialdehyde from L-glutamate: step 1/2. Its function is as follows. Catalyzes the transfer of a phosphate group to glutamate to form L-glutamate 5-phosphate. This is Glutamate 5-kinase from Citrifermentans bemidjiense (strain ATCC BAA-1014 / DSM 16622 / JCM 12645 / Bem) (Geobacter bemidjiensis).